The primary structure comprises 151 residues: Large ribosomal subunit protein uL23m (151 aa).

Basic and acidic residues predominate over residues 120–143 (DDKKSLEDAKKNHKKFLDKNKDRP). The disordered stretch occupies residues 120–151 (DDKKSLEDAKKNHKKFLDKNKDRPGTPGWFSI).

This sequence belongs to the universal ribosomal protein uL23 family. As to quaternary structure, component of the mitochondrial ribosome large subunit (39S) which comprises a 16S rRNA and about 50 distinct proteins.

It localises to the mitochondrion. The chain is Large ribosomal subunit protein uL23m (mRpL23) from Anopheles gambiae (African malaria mosquito).